We begin with the raw amino-acid sequence, 3507 residues long: Dynein axonemal heavy chain 14 (3507 aa).

The segment at 91–126 is disordered; that stretch reads PHLPGTQDPLRRVRDPTPIVASSPGRRRGSWSGGYG. Residues 354–381 adopt a coiled-coil conformation; that stretch reads DEFCEEQLQQATQALKQLEDIRNKAISE. The GPAGTGKT motif motif lies at 1164–1171; it reads GPAGTGKT. ATP is bound by residues 1164–1171 and 1427–1434; these read GPAGTGKT and GPTGGGKT. N1818 is a glycosylation site (N-linked (GlcNAc...) asparagine).

It belongs to the dynein heavy chain family. As to quaternary structure, consists of at least two heavy chains and a number of intermediate and light chains.

Its subcellular location is the cytoplasm. The protein resides in the cytoskeleton. It localises to the cilium axoneme. Force generating protein of respiratory cilia. Produces force towards the minus ends of microtubules. Dynein has ATPase activity; the force-producing power stroke is thought to occur on release of ADP. Involved in sperm motility; implicated in sperm flagellar assembly. In Homo sapiens (Human), this protein is Dynein axonemal heavy chain 14 (DNAH14).